Reading from the N-terminus, the 150-residue chain is UPF0756 membrane protein ABSDF1616 (150 aa).

4 helical membrane-spanning segments follow: residues 1 to 21 (MLAQ…CGLL), 45 to 65 (FFPY…TIGV), 83 to 103 (FISF…WLGG), and 115 to 135 (VVAG…GVPV).

Belongs to the UPF0756 family.

The protein localises to the cell membrane. The polypeptide is UPF0756 membrane protein ABSDF1616 (Acinetobacter baumannii (strain SDF)).